The following is a 143-amino-acid chain: Host transcription reprogramming factor 8 (143 aa).

Positions 1–19 are cleaved as a signal peptide; the sequence is MHTYKFIQIALLFASVALA. Pro residues predominate over residues 24–34; it reads PSPPNPPPVPQ. The disordered stretch occupies residues 24–43; sequence PSPPNPPPVPQLPNSETKSN. A C2H2-type 1 zinc finger spans residues 48 to 71; it reads HSCEFCGVVKPSGPAYLEHYHQNH. The segment at 77–99 is disordered; the sequence is GKLATPSPPNPPPVPTQKVETHA. Positions 82-91 are enriched in pro residues; sequence PSPPNPPPVP. A C2H2-type 2 zinc finger spans residues 103–126; the sequence is HGCEWCNKVEPSGPAYIKHYKENH.

The protein localises to the secreted. It localises to the host nucleus. Its function is as follows. Probable secreted effector that translocates into the nuclei of host cells to reprogram the expression of targeted genes by binding on effector binding elements in rice. The chain is Host transcription reprogramming factor 8 from Pyricularia oryzae (strain 70-15 / ATCC MYA-4617 / FGSC 8958) (Rice blast fungus).